The chain runs to 370 residues: Peptide chain release factor 2 (370 aa).

The residue at position 252 (glutamine 252) is an N5-methylglutamine.

Belongs to the prokaryotic/mitochondrial release factor family. Methylated by PrmC. Methylation increases the termination efficiency of RF2.

The protein localises to the cytoplasm. Functionally, peptide chain release factor 2 directs the termination of translation in response to the peptide chain termination codons UGA and UAA. In Mycobacterium avium (strain 104), this protein is Peptide chain release factor 2.